The following is a 244-amino-acid chain: Type III pantothenate kinase (244 aa).

8–15 (DQGNSACK) serves as a coordination point for ATP. Substrate-binding positions include Tyr88 and 94 to 97 (GADR). Asp96 acts as the Proton acceptor in catalysis. Asp117 contacts K(+). Thr120 lines the ATP pocket. Substrate is bound at residue Thr175.

The protein belongs to the type III pantothenate kinase family. As to quaternary structure, homodimer. It depends on NH4(+) as a cofactor. K(+) serves as cofactor.

The protein resides in the cytoplasm. The catalysed reaction is (R)-pantothenate + ATP = (R)-4'-phosphopantothenate + ADP + H(+). It functions in the pathway cofactor biosynthesis; coenzyme A biosynthesis; CoA from (R)-pantothenate: step 1/5. Functionally, catalyzes the phosphorylation of pantothenate (Pan), the first step in CoA biosynthesis. The chain is Type III pantothenate kinase from Porphyromonas gingivalis (strain ATCC BAA-308 / W83).